A 140-amino-acid chain; its full sequence is Large ribosomal subunit protein uL16 (140 aa).

Basic residues predominate over residues 1 to 16 (MLMPKRVKHRKQMKGR). A disordered region spans residues 1–20 (MLMPKRVKHRKQMKGRMKGD).

Belongs to the universal ribosomal protein uL16 family. Part of the 50S ribosomal subunit.

Its function is as follows. Binds 23S rRNA and is also seen to make contacts with the A and possibly P site tRNAs. The protein is Large ribosomal subunit protein uL16 of Geobacter sulfurreducens (strain ATCC 51573 / DSM 12127 / PCA).